A 1658-amino-acid chain; its full sequence is Cortactin-binding protein 2 (1658 aa).

Disordered regions lie at residues 1-24 (MATD…GATA), 203-235 (KTKT…SEFD), 348-437 (GAAL…LHPG), 451-475 (GNAN…SPTS), and 495-612 (RFTS…PPKP). The stretch at 119 to 276 (RKMQERMSTQ…EQLKRGNDSK (158 aa)) forms a coiled coil. Residues 214-235 (SAEKRRSTEMEAQMEKQLSEFD) show a composition bias toward basic and acidic residues. Positions 385-394 (GPSAGSASST) are enriched in low complexity. Residues 399–418 (NSTAPPTVQTPGIAPQSYSQ) show a composition bias toward polar residues. R495 bears the Asymmetric dimethylarginine mark. A compositionally biased stretch (low complexity) spans 509 to 520 (AAPTGDGGTCPP). The span at 580–590 (TMASPPSSLPQ) shows a compositional bias: polar residues. 6 ANK repeats span residues 706–736 (GRPT…DINY), 740–769 (DGHS…QVNA), 773–802 (NGFT…NINH), 806–835 (EGQT…DRSV), 839–868 (DGWT…PACR), and 909–939 (EGWT…EPER). The interval 1448–1478 (ESGAWRKVSTSPRKKSGRFSPPSWNKPGLSE) is disordered. S1521 is subject to Phosphoserine. 2 disordered regions span residues 1538-1595 (RSES…NSQS) and 1611-1642 (PRSK…NTKE). Residues 1539-1558 (SESDISKIADSRDDLRRFDG) show a composition bias toward basic and acidic residues. 2 stretches are compositionally biased toward polar residues: residues 1559 to 1569 (SRNNPAFSTVN) and 1581 to 1595 (PLSS…NSQS). Residues 1619 to 1633 (SQNTKRSSSSSNTRQ) are compositionally biased toward low complexity.

As to quaternary structure, interacts with CTTN/cortactin SH3 domain. Interacts with STRN, STRN4/zinedin and MOB4/phocein; this interactions mediate the association with the STRIPAK core complex and may regulate dendritic spine distribution of the STRIPAK complex in hippocampal neurons. Activation of glutamate receptors weakens the interaction with STRN and STRN4.

Its subcellular location is the cytoplasm. It localises to the cell cortex. It is found in the cell projection. The protein localises to the dendritic spine. Regulates the dendritic spine distribution of CTTN/cortactin in hippocampal neurons, and thus controls dendritic spinogenesis and dendritic spine maintenance. Associates with the striatin-interacting phosphatase and kinase (STRIPAK) core complex to regulate dendritic spine distribution of the STRIPAK complex in hippocampal neurons. The chain is Cortactin-binding protein 2 (CTTNBP2) from Neofelis nebulosa (Clouded leopard).